A 583-amino-acid polypeptide reads, in one-letter code: Putative fatty-acid--CoA ligase fadD25 (583 aa).

3 helical membrane-spanning segments follow: residues 77–97, 109–129, and 229–249; these read YVVS…LSIP, VFAD…DNVV, and FVLG…TSPI. The tract at residues 353 to 375 is disordered; the sequence is IVQFDPQKLPDGQAERTESDGGT.

It belongs to the ATP-dependent AMP-binding enzyme family.

It localises to the cell membrane. The polypeptide is Putative fatty-acid--CoA ligase fadD25 (fadD25) (Mycobacterium tuberculosis (strain CDC 1551 / Oshkosh)).